The primary structure comprises 649 residues: Echinoderm microtubule-associated protein-like 2 (649 aa).

The tandem atypical propeller in EMLs stretch occupies residues 10 to 649; the sequence is KEVIFSVEDG…DTSVLQWRVV (640 aa). Coiled-coil stretches lie at residues 13-58 and 73-114; these read IFSV…LKLE and YLLP…LAIH. 12 WD repeats span residues 56-93, 97-144, 151-192, 195-234, 241-280, 285-323, 369-406, 410-447, 452-489, 495-535, 564-602, and 609-648; these read KLEWVYGYRGRDCRANLYLLPTGEIVYFVASVAVLYSV, RQRH…IWDS, HVLG…VWDW, ETKVVDVKCSNEAVLVATFHPTDPTVLITCGKSHIYFWTL, KRQGLFEKHEKPKYVLCVTFLEGGDVVTGDSGGNLYVWGK, ITQAVLGAHDGGVFGLCALRDGTLVSGGGRDRRVVLWGS, FSLLVQGHVEELWGLATHPSRAQFVTCGQDKLVHLWSS, QPLWSRIIEDPARSAGFHPSGSVLAVGTVTGRWLLLDT, LVAIHTDGNEQISVVSFSPDGAYLAVGSHDNLVYVYTV, KVSR…YWDP, FGIWSEGADGTDINAVARSHDGKLLASADDFGKVHLFSY, and ALSHKYGGHSSHVTNVAFLWDDSMALTTGGKDTSVLQWRV.

Belongs to the WD repeat EMAP family. In terms of assembly, homotrimer; self-association is mediated by the N-terminal coiled coil. Interacts with GRID2 and may also interact with GRID1. Interacts with EML3. Binds unpolymerized tubulins via its WD repeat region. In terms of tissue distribution, ubiquitous.

It is found in the cytoplasm. The protein localises to the cytoskeleton. Its subcellular location is the spindle. In terms of biological role, tubulin binding protein that inhibits microtubule nucleation and growth, resulting in shorter microtubules. The protein is Echinoderm microtubule-associated protein-like 2 (EML2) of Homo sapiens (Human).